The chain runs to 474 residues: Sugar transporter ERD6-like 17 (474 aa).

The next 12 membrane-spanning stretches (helical) occupy residues 27–47 (ITACVILSTFVAVCGSFSFGV), 76–96 (FATLGAAIGALFCGNLAMVIG), 106–126 (FLCITGWLSIAFAKEVVLLNF), 129–149 (IISGIGFGLTSYVVPVYIAEI), 159–180 (TFSNQLLQNAGLAMIYFCGNFI), 184–204 (TLALLGALPCFIQVIGLFFVP), 266–286 (TLVVGIGLMLIQQFSGSAAVI), 302–322 (IGTTMLGIFVIPKAMIGLILV), 329–349 (PLLMTSAFGMSMTCMLLGVAF), 363–383 (ILSFICVMMYIATYAIGLGGL), 403–423 (IVTLVSFSSSSIVTYAFNFLF), and 429–449 (GTFFIFAGIGGAALLFIWLLV).

It belongs to the major facilitator superfamily. Sugar transporter (TC 2.A.1.1) family. As to expression, expressed in young seedlings.

It is found in the membrane. In terms of biological role, sugar transporter. The sequence is that of Sugar transporter ERD6-like 17 from Arabidopsis thaliana (Mouse-ear cress).